We begin with the raw amino-acid sequence, 58 residues long: Large ribosomal subunit protein uL30 (58 aa).

This sequence belongs to the universal ribosomal protein uL30 family. In terms of assembly, part of the 50S ribosomal subunit.

This is Large ribosomal subunit protein uL30 from Buchnera aphidicola subsp. Baizongia pistaciae (strain Bp).